We begin with the raw amino-acid sequence, 519 residues long: Cell division cycle protein 20 homolog B (519 aa).

The interval Trp-77–Gly-106 is disordered. Low complexity predominate over residues Ser-87–Pro-96. WD repeat units lie at residues Arg-229–Asn-266, Val-271–Asn-310, Tyr-353–Gly-392, Pro-399–Thr-441, Ser-443–Gly-484, and Gly-487–Cys-519.

This sequence belongs to the WD repeat CDC20/Fizzy family. Expressed in multiciliated cells (MCCs).

The protein resides in the cytoplasm. Protein regulator of centriole-deuterosome disengagement and subsequently participates in the ciliogenesis in multiciliated cells (MCCs). The chain is Cell division cycle protein 20 homolog B from Mus musculus (Mouse).